Consider the following 613-residue polypeptide: Leucine-rich repeat receptor-like protein FASCIATED EAR2 (613 aa).

Positions 1–28 (MLTATPLPHQLLATFLLVLASATQPAVP) are cleaved as a signal peptide. At 29–573 (ASTDRAALLA…WLGGWHGENG (545 aa)) the chain is on the extracellular side. LRR repeat units lie at residues 79–103 (TPSV…PLAL), 104–128 (LRRL…LPRS), 130–150 (LALD…LPSS), 151–176 (LPAL…SFPA), 178–199 (LAAL…IVAD), 202–226 (NSAL…IAAV), 227–250 (RSLQ…IGNL), 251–274 (TYLQ…LAGC), 276–297 (QLLY…ELDA), 298–322 (LASL…LAGC), 324–346 (SLEV…VAKW), 347–370 (LSLK…MFSF), 372–394 (LLQW…GFNV), 435–459 (VQAT…LVDM), 460–483 (KGLE…LGGM), 484–507 (GRLH…IAAM), and 508–531 (TVLE…KFPG). N91 carries N-linked (GlcNAc...) asparagine glycosylation. N-linked (GlcNAc...) asparagine glycosylation occurs at N158. N249 carries N-linked (GlcNAc...) asparagine glycosylation. Residue N393 is glycosylated (N-linked (GlcNAc...) asparagine). N-linked (GlcNAc...) asparagine glycosylation occurs at N466. Residue N514 is glycosylated (N-linked (GlcNAc...) asparagine). Residues 574-597 (WVSLGAFCISTMTSFYVSLATLLC) traverse the membrane as a helical segment. Residues 598–613 (SSNARNFVFRPVRVEY) are Cytoplasmic-facing.

In terms of tissue distribution, expressed in ear primordia, vegetative apex and young leaf tissues. Barely detected in expanded leaf tissues and not expressed in roots.

The protein localises to the cell membrane. Its function is as follows. Receptor-like protein that regulates shoot meristem proliferation. Based on additive and synergistic phenotypes of double mutants, it is probable that unlike CLV1 and CLV2 in A.thaliana, FAE2 and TD1 do not function exclusively in a single pathway. The sequence is that of Leucine-rich repeat receptor-like protein FASCIATED EAR2 (FEA2) from Zea mays (Maize).